A 218-amino-acid polypeptide reads, in one-letter code: Large ribosomal subunit protein uL4 (218 aa).

Residues 55 to 83 (THATKTRGMVSGGGKKPWKQKGTGRARQG) are disordered.

This sequence belongs to the universal ribosomal protein uL4 family. Part of the 50S ribosomal subunit.

Its function is as follows. One of the primary rRNA binding proteins, this protein initially binds near the 5'-end of the 23S rRNA. It is important during the early stages of 50S assembly. It makes multiple contacts with different domains of the 23S rRNA in the assembled 50S subunit and ribosome. Forms part of the polypeptide exit tunnel. This is Large ribosomal subunit protein uL4 from Bifidobacterium longum (strain DJO10A).